The sequence spans 257 residues: Protein orai-2 (257 aa).

Transmembrane regions (helical) follow at residues 67–84 (TSALLSGFAMVAMVEVQL), 95–115 (LIAFSACTTVLVAVHLFALLI), 149–169 (LAWGFSTVLGILLFLAEVVLL), and 199–219 (AALVSTIIMVPVGLIFVVFTI).

The protein belongs to the Orai family.

The protein resides in the membrane. Ca(2+) release-activated Ca(2+)-like (CRAC-like) channel subunit which mediates Ca(2+) influx and increase in Ca(2+)-selective current by synergy with the Ca(2+) sensor, STIM1. This Gallus gallus (Chicken) protein is Protein orai-2 (ORAI2).